Consider the following 307-residue polypeptide: MTAEQQAGQGATRCGFVALIGAPNVGKSTLVNALVGSKVTIVSRKVQTTRALIRGIVIEGQSQIILVDTPGIFSPKRRLDRAMVTTAWSGAHDADLVCVLLDAKKGLDDEAQAIIDKAASVAHEKILVVNKVDLVPREKLLALVAAANEKLAFARTFMISALSGDGVDDLRRALAEMVPPGPFHYPEDQMSDAPMRHLAAEITREKIYSHLHQELPYQSTVETDSWTERNDGSIRIEQTIFVERDSQRKIVLGKGGATIKSIGAQSRKEIAEITGVPVHLFLFVKVRENWGDDPDRYREMGLEFPRE.

Residues 13 to 180 enclose the Era-type G domain; that stretch reads RCGFVALIGA…RRALAEMVPP (168 aa). The segment at 21–28 is G1; sequence GAPNVGKS. 21 to 28 is a binding site for GTP; the sequence is GAPNVGKS. The G2 stretch occupies residues 47–51; the sequence is QTTRA. Residues 68–71 form a G3 region; the sequence is DTPG. GTP is bound by residues 68–72 and 130–133; these read DTPGI and NKVD. Residues 130–133 are G4; the sequence is NKVD. The G5 stretch occupies residues 159–161; the sequence is ISA. One can recognise a KH type-2 domain in the interval 211-288; the sequence is LHQELPYQST…HLFLFVKVRE (78 aa).

It belongs to the TRAFAC class TrmE-Era-EngA-EngB-Septin-like GTPase superfamily. Era GTPase family. As to quaternary structure, monomer.

The protein localises to the cytoplasm. It is found in the cell inner membrane. An essential GTPase that binds both GDP and GTP, with rapid nucleotide exchange. Plays a role in 16S rRNA processing and 30S ribosomal subunit biogenesis and possibly also in cell cycle regulation and energy metabolism. This Bradyrhizobium sp. (strain ORS 278) protein is GTPase Era.